The following is a 300-amino-acid chain: Interferon-stimulated gene 20 kDa protein (300 aa).

Mn(2+) is bound by residues aspartate 11, glutamate 13, aspartate 90, and histidine 93.

Belongs to the exonuclease superfamily. Associates with PML and SP100 in the PML NB complex. Associates with survival motor neuron protein (SMN)-containing macromolecular nuclear complexes and U1 and U2 snRNAs and U3 snoRNA. Requires Mn(2+) as cofactor.

The protein localises to the nucleus. It localises to the nucleolus. Its subcellular location is the cytoplasm. The protein resides in the cajal body. It is found in the P-body. It carries out the reaction Exonucleolytic cleavage in the 3'- to 5'-direction to yield nucleoside 5'-phosphates.. Interferon-induced antiviral exoribonuclease that acts mainly on single-stranded RNA. Inhibition of several viruses does not involve the degradation of viral RNAs, but rather the inhibition of translation of viral proteins. Exerts a translational control over a large panel of non-self RNA substrates while sparing endogenous transcripts. This activity correlates with the protein's ability to localize in cytoplasmic processing bodies. May also act as master regulator of over hundred interferon stimulated genes leading to viral genome translation inhibition. May play additional roles in the maturation of snRNAs and rRNAs, and in ribosome biogenesis. The sequence is that of Interferon-stimulated gene 20 kDa protein (Isg20) from Mus musculus (Mouse).